The chain runs to 229 residues: Protein 33K (229 aa).

The disordered stretch occupies residues 1-157; that stretch reads MAPKKKLQLP…GALRLAPNEP (157 aa). Over residues 14–54 the composition is skewed to acidic residues; the sequence is TDEEEYWDSQAEEVLDEEEEDMMEDWESLDEEASEVEEVSD. Composition is skewed to low complexity over residues 55-64, 71-82, and 100-122; these read ETPSPSVAFP, SATGSSMATTSA, and TTGT…AAAT. The interval 172 to 199 is necessary for nuclear subcellular location; that stretch reads YAIFQQSRGQEQELKIKNRSLRSLTRSC. Residues 178–198 form an RS-repeat; required for splicing enhancer activity region; that stretch reads SRGQEQELKIKNRSLRSLTRS.

The protein belongs to the adenoviridae splicing factor family. Homooligomer. Interacts with DBP; this interaction occurs at a unique vertex during genome packaging. Interacts with IVa2; this interaction occurs at a unique vertex during genome packaging and seems to potentiate IVa2 and 33K oligomerization. Post-translationally, phosphorylated in vitro by human PKA and PRKDC. PRKDC inhibits, whereas PKA activates the splicing factor.

The protein localises to the host nucleus. Functionally, promotes alternative splicing of late transcripts by promoting splicing at weak 3' splice sites. Required for the temporal activation of major late pre-mRNA splicing at late times of infection. Induces the splicing and expression of the late capsid vertex protein. Probably functions as the small terminase that is part of the molecular motor that translocates genomic DNA in empty capsid during DNA packaging. This motor is located at a unique vertex and comprises at least the IVa2 ATPase, the small terminase 33K and probably a portal. Forms a ring-like structure of about 17 nm in which genomic DNA is translocated into the capsid. Stimulates IVa2 ATPase activity in the presence of the viral genome. Once the DNA is packaged, the terminase detaches: the 33K protein is present in the empty particles, but not in the mature virions. Also involved in virion assembly. This is Protein 33K from Homo sapiens (Human).